Here is a 555-residue protein sequence, read N- to C-terminus: Wee1-like protein kinase 2 (555 aa).

A disordered region spans residues 1–112 (MADTETDQGL…NFSTPKNSLG (112 aa)). Serine 15 is subject to Phosphoserine; by CaMK2 and PKA. Positions 26 to 41 (EGQMTAQDIGGAQSQK) are enriched in polar residues. Residues 57 to 72 (TRDELHTSLSRDKESP) are compositionally biased toward basic and acidic residues. Phosphoserine is present on serine 71. A compositionally biased stretch (polar residues) spans 102–112 (TNFSTPKNSLG). The short motif at 167 to 169 (KRK) is the Nuclear localization signal element. The Protein kinase domain maps to 208–485 (FFEIEKIGVG…ARSRILWPFL (278 aa)). ATP-binding positions include 214 to 222 (IGVGEFGTV) and lysine 237. Residues 310–324 (KLKDILLQISLGLKY) carry the Nuclear export signal motif. The Proton acceptor role is filled by aspartate 334. Mg(2+)-binding residues include asparagine 339 and aspartate 375. Positions 488–514 (TDELQKQLNLEKSKTATLKRELKKARH) form a coiled coil.

The protein belongs to the protein kinase superfamily. Ser/Thr protein kinase family. WEE1 subfamily. In terms of processing, phosphorylated by PKA at Ser-15 in vitro, leading to activate kinase activity. Phosphorylation at Ser-15 by CaMK2, leading to increase its activity and promote metaphase II exit during egg activation. As to expression, ovary-specific.

The protein resides in the cytoplasm. The protein localises to the nucleus. The enzyme catalyses L-tyrosyl-[protein] + ATP = O-phospho-L-tyrosyl-[protein] + ADP + H(+). Oocyte-specific protein tyrosine kinase that phosphorylates and inhibits CDK1 and acts as a key regulator of meiosis during both prophase I and metaphase II. Required to maintain meiotic arrest in oocytes during the germinal vesicle (GV) stage, a long period of quiescence at dictyate prophase I, by phosphorylating CDK1 at 'Tyr-15', leading to inhibit CDK1 activity and prevent meiotic reentry. Also required for metaphase II exit during egg activation by phosphorylating CDK1 at 'Tyr-15', to ensure exit from meiosis in oocytes and promote pronuclear formation. In Mus musculus (Mouse), this protein is Wee1-like protein kinase 2 (Wee2).